Reading from the N-terminus, the 968-residue chain is Protein translocase subunit SecA 1 (968 aa).

ATP-binding positions include Q86, 104 to 108 (GEGKT), and D493. Basic and acidic residues-rich tracts occupy residues 858–868 (EAEKTEDKAED) and 883–898 (ESAK…ESVA). The tract at residues 858–968 (EAEKTEDKAE…KCHGAPKSRV (111 aa)) is disordered. Residues C949, C951, C960, and H961 each coordinate Zn(2+). The segment covering 955 to 968 (KKYKKCHGAPKSRV) has biased composition (basic residues).

This sequence belongs to the SecA family. Monomer and homodimer. Part of the essential Sec protein translocation apparatus which comprises SecA, SecYEG and auxiliary proteins SecDF. Other proteins may also be involved. Zn(2+) is required as a cofactor.

It localises to the cell membrane. Its subcellular location is the cytoplasm. It carries out the reaction ATP + H2O + cellular proteinSide 1 = ADP + phosphate + cellular proteinSide 2.. Functionally, part of the Sec protein translocase complex. Interacts with the SecYEG preprotein conducting channel. Has a central role in coupling the hydrolysis of ATP to the transfer of proteins into and across the cell membrane, serving as an ATP-driven molecular motor driving the stepwise translocation of polypeptide chains across the membrane. This chain is Protein translocase subunit SecA 1, found in Thermobifida fusca (strain YX).